The chain runs to 67 residues: Large ribosomal subunit protein bL31 (67 aa).

4 residues coordinate Zn(2+): C16, C18, C38, and C41.

It belongs to the bacterial ribosomal protein bL31 family. Type A subfamily. As to quaternary structure, part of the 50S ribosomal subunit. The cofactor is Zn(2+).

In terms of biological role, binds the 23S rRNA. In Thioalkalivibrio sulfidiphilus (strain HL-EbGR7), this protein is Large ribosomal subunit protein bL31.